The primary structure comprises 256 residues: Acetyl-coenzyme A carboxylase carboxyl transferase subunit beta 2 (256 aa).

Residues 1 to 256 (MTVKCNKCKE…LAIHAETVSA (256 aa)) form the CoA carboxyltransferase N-terminal domain. Positions 5, 8, 24, and 27 each coordinate Zn(2+). A C4-type zinc finger spans residues 5 to 27 (CNKCKEEINKEDLEKNYYICPLC).

It belongs to the AccD/PCCB family. Acetyl-CoA carboxylase is a heterohexamer composed of biotin carboxyl carrier protein (AccB), biotin carboxylase (AccC) and two subunits each of ACCase subunit alpha (AccA) and ACCase subunit beta (AccD). Zn(2+) serves as cofactor.

Its subcellular location is the cytoplasm. The enzyme catalyses N(6)-carboxybiotinyl-L-lysyl-[protein] + acetyl-CoA = N(6)-biotinyl-L-lysyl-[protein] + malonyl-CoA. It functions in the pathway lipid metabolism; malonyl-CoA biosynthesis; malonyl-CoA from acetyl-CoA: step 1/1. Its function is as follows. Component of the acetyl coenzyme A carboxylase (ACC) complex. Biotin carboxylase (BC) catalyzes the carboxylation of biotin on its carrier protein (BCCP) and then the CO(2) group is transferred by the transcarboxylase to acetyl-CoA to form malonyl-CoA. The protein is Acetyl-coenzyme A carboxylase carboxyl transferase subunit beta 2 of Lachnospira eligens (strain ATCC 27750 / DSM 3376 / VPI C15-48 / C15-B4) (Eubacterium eligens).